The primary structure comprises 147 residues: Sentan (147 aa).

Residues 14 to 34 (RLEGEPNPPAAPTSTLAPKNM) form a disordered region. The segment covering 25-34 (PTSTLAPKNM) has biased composition (polar residues).

It belongs to the S-100 family.

It localises to the cell projection. It is found in the cilium. May be a component of the linker structure that bridges the ciliary membrane and peripheral singlet microtubules. The sequence is that of Sentan (SNTN) from Bos taurus (Bovine).